Reading from the N-terminus, the 408-residue chain is DNA polymerase processivity factor (408 aa).

A Nuclear localization signal motif is present at residues 344 to 353 (KKRRNLLTKR).

This sequence belongs to the herpesviridae DNA polymerase processivity factor family. As to quaternary structure, interacts with the DNA polymerase catalytic subunit. Interacts with the origin-binding protein.

The protein resides in the host nucleus. Plays an essential role in viral DNA replication by acting as the polymerase accessory subunit. Associates with the viral polymerase to increase its processivity and forms high-affinity direct interactions with DNA. Facilitates the origin-binding protein loading onto DNA thus increasing its ability to assemble into a functional complex capable of unwinding duplex DNA. In Varicella-zoster virus (strain Oka vaccine) (HHV-3), this protein is DNA polymerase processivity factor.